The primary structure comprises 64 residues: Large ribosomal subunit protein bL35 (64 aa).

This sequence belongs to the bacterial ribosomal protein bL35 family.

In Acinetobacter baumannii (strain AB307-0294), this protein is Large ribosomal subunit protein bL35.